The chain runs to 96 residues: MPKSHGFRKNTRDKLKKSVRERGISPVVRAIQDFAVGEKVHIIIDPSIHKGMPHPKFHGRTGTVVGRRGRAYVLEVPDQSAKKLVIALPEHLVAQK.

It belongs to the eukaryotic ribosomal protein eL21 family.

The protein is Large ribosomal subunit protein eL21 of Methanothrix thermoacetophila (strain DSM 6194 / JCM 14653 / NBRC 101360 / PT) (Methanosaeta thermophila).